Here is a 337-residue protein sequence, read N- to C-terminus: HTH-type transcriptional regulator DegA (337 aa).

Residues 1-57 (MKTTIYDVAKAAGVSITTVSRVINNTGRISDKTRQKVMNVMNEMAYTPNVHAAALTG) enclose the HTH lacI-type domain. Residues 5 to 24 (IYDVAKAAGVSITTVSRVIN) constitute a DNA-binding region (H-T-H motif). Positions 300–319 (AERHRTAGRSNRGKRKAKQK) are disordered.

Involved in the control of degradation of B.subtilis amidophosphoribosyltransferase (purF). Probably activates the gene for a degradative protease. The polypeptide is HTH-type transcriptional regulator DegA (degA) (Bacillus subtilis (strain 168)).